Reading from the N-terminus, the 213-residue chain is Large ribosomal subunit protein uL1 (213 aa).

Belongs to the universal ribosomal protein uL1 family. As to quaternary structure, part of the 50S ribosomal subunit.

In terms of biological role, binds directly to 23S rRNA. Probably involved in E site tRNA release. Its function is as follows. Protein L1 is also a translational repressor protein, it controls the translation of its operon by binding to its mRNA. This chain is Large ribosomal subunit protein uL1, found in Methanococcus voltae.